A 336-amino-acid polypeptide reads, in one-letter code: CENP-A histone chaperone scm3 (336 aa).

Residues 243-269 (RRRNPLLSSPKTPLRRSFSKSKVRNSN) form a disordered region. A compositionally biased stretch (basic residues) spans 255-269 (PLRRSFSKSKVRNSN).

The protein resides in the cytoplasm. It is found in the nucleus. Centromeric protein that plays a central role in the incorporation and maintenance of histone H3-like variant CENPA at centromeres. This is CENP-A histone chaperone scm3 from Schizosaccharomyces pombe (strain 972 / ATCC 24843) (Fission yeast).